The primary structure comprises 268 residues: Glutamine amidotransferase-like class 1 domain-containing protein 3, mitochondrial (268 aa).

A mitochondrion-targeting transit peptide spans 1–41; sequence MAAVRVLVASRLAAASAFTSLSPGGRTPSQRAALHLSVPRP. N6-acetyllysine is present on residues Lys-151, Lys-157, and Lys-164. Lys-203 carries the post-translational modification N6-acetyllysine; alternate. Residue Lys-203 is modified to N6-succinyllysine; alternate. Lys-219 carries the post-translational modification N6-acetyllysine. Residues Lys-223 and Lys-233 each carry the N6-acetyllysine; alternate modification. Residues Lys-223 and Lys-233 each carry the N6-succinyllysine; alternate modification.

The protein belongs to the GATD3 family.

Its subcellular location is the mitochondrion. This is Glutamine amidotransferase-like class 1 domain-containing protein 3, mitochondrial from Homo sapiens (Human).